Here is a 278-residue protein sequence, read N- to C-terminus: Undecaprenyl-diphosphatase (278 aa).

8 consecutive transmembrane segments (helical) span residues 3–23 (YILI…IPIS), 42–62 (VAYS…IIYF), 88–108 (FLVI…LFVI), 112–132 (ILGL…IIIY), 152–172 (IIIV…RSGI), 190–210 (LSFI…VLFS), 225–245 (GLLI…NALL), and 253–273 (VVVL…LSGI).

It belongs to the UppP family.

The protein localises to the cell membrane. The catalysed reaction is di-trans,octa-cis-undecaprenyl diphosphate + H2O = di-trans,octa-cis-undecaprenyl phosphate + phosphate + H(+). Its function is as follows. Catalyzes the dephosphorylation of undecaprenyl diphosphate (UPP). The chain is Undecaprenyl-diphosphatase from Saccharolobus islandicus (strain M.16.4 / Kamchatka #3) (Sulfolobus islandicus).